We begin with the raw amino-acid sequence, 71 residues long: Ceratotoxin-D (71 aa).

An N-terminal signal peptide occupies residues methionine 1 to glycine 23. The propeptide occupies alanine 24 to arginine 35.

Homomer of four to six subunits.

The protein resides in the secreted. Functionally, female-specific peptides with potent activity against Gram-positive and Gram-negative bacteria. They have as well hemolytic activity. The chain is Ceratotoxin-D (CTXD) from Ceratitis capitata (Mediterranean fruit fly).